A 348-amino-acid polypeptide reads, in one-letter code: Calcium-gated potassium channel TvoK (348 aa).

The next 3 helical transmembrane spans lie at 19–39 (LTKV…LEFL), 52–72 (YFTA…GDVV), and 80–100 (VVAM…TATI). The region spanning 120 to 246 (KNHTIICNWN…VSAGATEVLS (127 aa)) is the RCK N-terminal domain. The RCK C-terminal domain maps to 266 to 348 (DFILKSLSET…KKEVEEAIKG (83 aa)).

As to quaternary structure, heterooctamer composed of four full-length subunits and four soluble RCK domains.

The protein localises to the cell membrane. Its function is as follows. Calcium-gated potassium channel. Can also be activated by Mg(2+), Mn(2+) and Ni(2+). The sequence is that of Calcium-gated potassium channel TvoK from Thermoplasma volcanium (strain ATCC 51530 / DSM 4299 / JCM 9571 / NBRC 15438 / GSS1).